The following is a 619-amino-acid chain: Chaperone protein HscA homolog (619 aa).

This sequence belongs to the heat shock protein 70 family.

In terms of biological role, chaperone involved in the maturation of iron-sulfur cluster-containing proteins. Has a low intrinsic ATPase activity which is markedly stimulated by HscB. The polypeptide is Chaperone protein HscA homolog (Acinetobacter baumannii (strain AB0057)).